Consider the following 158-residue polypeptide: Cyclic pyranopterin monophosphate synthase (158 aa).

Substrate contacts are provided by residues 75–77 and 113–114; these read LCH and ME. Residue Asp128 is part of the active site.

Belongs to the MoaC family. In terms of assembly, homohexamer; trimer of dimers.

The enzyme catalyses (8S)-3',8-cyclo-7,8-dihydroguanosine 5'-triphosphate = cyclic pyranopterin phosphate + diphosphate. The protein operates within cofactor biosynthesis; molybdopterin biosynthesis. Catalyzes the conversion of (8S)-3',8-cyclo-7,8-dihydroguanosine 5'-triphosphate to cyclic pyranopterin monophosphate (cPMP). This is Cyclic pyranopterin monophosphate synthase from Paraburkholderia xenovorans (strain LB400).